The chain runs to 100 residues: MHLTPRELDKLMIYCLAEVAHKRKAQGIKLNHPESVAVISAAALDGARAGKTVEDVMKDAATVLTRDDVMEGVPEMIPLVQVEAVFTDGSRLVTVHSPIQ.

The protein belongs to the urease gamma subunit family. As to quaternary structure, heterotrimer of UreA (gamma), UreB (beta) and UreC (alpha) subunits. Three heterotrimers associate to form the active enzyme.

Its subcellular location is the cytoplasm. It carries out the reaction urea + 2 H2O + H(+) = hydrogencarbonate + 2 NH4(+). It functions in the pathway nitrogen metabolism; urea degradation; CO(2) and NH(3) from urea (urease route): step 1/1. This chain is Urease subunit gamma, found in Laribacter hongkongensis (strain HLHK9).